The sequence spans 183 residues: 1,6-anhydro-N-acetylmuramyl-L-alanine amidase AmpD (183 aa).

Residues 30–167 form the N-acetylmuramoyl-L-alanine amidase domain; sequence LLVVHNISLP…APDRKTDPGP (138 aa). Residue His34 participates in Zn(2+) binding. Catalysis depends on Glu116, which acts as the Proton acceptor. 2 residues coordinate Zn(2+): His154 and Asp164.

It belongs to the N-acetylmuramoyl-L-alanine amidase 2 family. It depends on Zn(2+) as a cofactor.

Its subcellular location is the cytoplasm. It carries out the reaction Hydrolyzes the link between N-acetylmuramoyl residues and L-amino acid residues in certain cell-wall glycopeptides.. Involved in cell wall peptidoglycan recycling. Specifically cleaves the amide bond between the lactyl group of N-acetylmuramic acid and the alpha-amino group of the L-alanine in degradation products containing an anhydro N-acetylmuramyl moiety. Is also involved in beta-lactamase induction. The protein is 1,6-anhydro-N-acetylmuramyl-L-alanine amidase AmpD (ampD) of Escherichia coli (strain K12).